Reading from the N-terminus, the 353-residue chain is Photosystem II protein D1 (353 aa).

Threonine 2 carries the N-acetylthreonine modification. Threonine 2 carries the phosphothreonine modification. The next 3 membrane-spanning stretches (helical) occupy residues 29-46, 118-133, and 142-156; these read YIGW…TATS, HFLL…EWEL, and WIAV…AATA. Histidine 118 contacts chlorophyll a. Tyrosine 126 contributes to the pheophytin a binding site. [CaMn4O5] cluster-binding residues include aspartate 170 and glutamate 189. Residues 197–218 form a helical membrane-spanning segment; it reads FHMLGVAGVFGGSLFSAMHGSL. Chlorophyll a is bound at residue histidine 198. A quinone contacts are provided by residues histidine 215 and 264–265; that span reads SF. Residue histidine 215 coordinates Fe cation. Histidine 272 provides a ligand contact to Fe cation. A helical transmembrane segment spans residues 274-288; the sequence is FLAAWPVVGIWFTAL. Histidine 332, glutamate 333, aspartate 342, and alanine 344 together coordinate [CaMn4O5] cluster. Positions 345–353 are excised as a propeptide; it reads GVEVPSTNG.

The protein belongs to the reaction center PufL/M/PsbA/D family. In terms of assembly, PSII is composed of 1 copy each of membrane proteins PsbA, PsbB, PsbC, PsbD, PsbE, PsbF, PsbH, PsbI, PsbJ, PsbK, PsbL, PsbM, PsbT, PsbX, PsbY, PsbZ, Psb30/Ycf12, at least 3 peripheral proteins of the oxygen-evolving complex and a large number of cofactors. It forms dimeric complexes. Requires The D1/D2 heterodimer binds P680, chlorophylls that are the primary electron donor of PSII, and subsequent electron acceptors. It shares a non-heme iron and each subunit binds pheophytin, quinone, additional chlorophylls, carotenoids and lipids. D1 provides most of the ligands for the Mn4-Ca-O5 cluster of the oxygen-evolving complex (OEC). There is also a Cl(-1) ion associated with D1 and D2, which is required for oxygen evolution. The PSII complex binds additional chlorophylls, carotenoids and specific lipids. as cofactor. Tyr-161 forms a radical intermediate that is referred to as redox-active TyrZ, YZ or Y-Z. In terms of processing, C-terminally processed by CTPA; processing is essential to allow assembly of the oxygen-evolving complex and thus photosynthetic growth.

It is found in the plastid. The protein localises to the chloroplast thylakoid membrane. The catalysed reaction is 2 a plastoquinone + 4 hnu + 2 H2O = 2 a plastoquinol + O2. Photosystem II (PSII) is a light-driven water:plastoquinone oxidoreductase that uses light energy to abstract electrons from H(2)O, generating O(2) and a proton gradient subsequently used for ATP formation. It consists of a core antenna complex that captures photons, and an electron transfer chain that converts photonic excitation into a charge separation. The D1/D2 (PsbA/PsbD) reaction center heterodimer binds P680, the primary electron donor of PSII as well as several subsequent electron acceptors. This chain is Photosystem II protein D1, found in Morus indica (Mulberry).